Consider the following 245-residue polypeptide: 1-(5-phosphoribosyl)-5-[(5-phosphoribosylamino)methylideneamino] imidazole-4-carboxamide isomerase (245 aa).

D7 acts as the Proton acceptor in catalysis. The active-site Proton donor is the D129.

The protein belongs to the HisA/HisF family.

It is found in the cytoplasm. It carries out the reaction 1-(5-phospho-beta-D-ribosyl)-5-[(5-phospho-beta-D-ribosylamino)methylideneamino]imidazole-4-carboxamide = 5-[(5-phospho-1-deoxy-D-ribulos-1-ylimino)methylamino]-1-(5-phospho-beta-D-ribosyl)imidazole-4-carboxamide. Its pathway is amino-acid biosynthesis; L-histidine biosynthesis; L-histidine from 5-phospho-alpha-D-ribose 1-diphosphate: step 4/9. The protein is 1-(5-phosphoribosyl)-5-[(5-phosphoribosylamino)methylideneamino] imidazole-4-carboxamide isomerase of Escherichia coli (strain ATCC 8739 / DSM 1576 / NBRC 3972 / NCIMB 8545 / WDCM 00012 / Crooks).